Consider the following 88-residue polypeptide: Cell division topological specificity factor (88 aa).

It belongs to the MinE family.

Functionally, prevents the cell division inhibition by proteins MinC and MinD at internal division sites while permitting inhibition at polar sites. This ensures cell division at the proper site by restricting the formation of a division septum at the midpoint of the long axis of the cell. This chain is Cell division topological specificity factor, found in Aeromonas hydrophila subsp. hydrophila (strain ATCC 7966 / DSM 30187 / BCRC 13018 / CCUG 14551 / JCM 1027 / KCTC 2358 / NCIMB 9240 / NCTC 8049).